The primary structure comprises 121 residues: MYVRRFYSDWFSGFSMFKNFNSSSFGLDSIIFFKYNRCFISSLEKSLNCIESSSFGTTTLVSSFKSHNFLKLLLLEADLLLLLLSLLLTWKYIKEAMSLTILSSLLPFWDPFDTNLSIKLS.

This is an uncharacterized protein from Saccharomyces cerevisiae (strain ATCC 204508 / S288c) (Baker's yeast).